Here is a 391-residue protein sequence, read N- to C-terminus: MPQALSTDILIVGGGIAGLWLNARLRRAGYATVLVESASLGGGQSVKSQGIIHGGAKYALHGALTGASEAIADMPRRWRACLGSDGELDLRGVRLLSEAHYLWSPGGLAGSLTSFFASKAVRSRVEQAKGEDLPPALRDKGFKGKAYRLTEIVFDVPDLIRRLAELAGDSLLAGERIEPLREGRELAGLCVDGREIRAQRVVLSAGAGNEALLRELGLEQPAMQRRPLHMVMVKAATLKPLYAHCLGAGPKPRITVTTHPTRDGQSVWYLGGDIAETDGVARDEAAQIAEARRELAKLLPWIDLGQAQWATLRVDRAEPAQSNLLRPDNAFLAEQGRLLVGWPTKLALAPDFADRVCARLEEDGIRPSEHAALPQLPRPPLAEPAWEVAFA.

FAD-binding positions include alanine 17, glutamate 36, 44-45, 49-51, and 346-347; these read QS, QGI, and LA.

Belongs to the DAO family. Monomer. Requires FAD as cofactor.

Functionally, probably functions as a FAD-dependent oxidoreductase, whose physiological substrate is unknown. Does not display amino-acid oxidase or glycerol-3-phosphate dehydrogenase activities. Is essential for growth of P.aeruginosa in the sputum of cystic fibrosis patients. This is Probable FAD-dependent oxidoreductase PA4991 from Pseudomonas aeruginosa (strain ATCC 15692 / DSM 22644 / CIP 104116 / JCM 14847 / LMG 12228 / 1C / PRS 101 / PAO1).